We begin with the raw amino-acid sequence, 158 residues long: Transcriptional regulator MraZ (158 aa).

SpoVT-AbrB domains lie at 7–54 (NIEA…PEEV) and 84–127 (VEII…AKER).

It belongs to the MraZ family. In terms of assembly, forms oligomers.

It is found in the cytoplasm. Its subcellular location is the nucleoid. This is Transcriptional regulator MraZ from Bacteroides fragilis (strain ATCC 25285 / DSM 2151 / CCUG 4856 / JCM 11019 / LMG 10263 / NCTC 9343 / Onslow / VPI 2553 / EN-2).